A 542-amino-acid chain; its full sequence is Chaperonin GroEL (542 aa).

ATP-binding positions include 29-32 (TLGP), Lys-50, 86-90 (DGTTT), Gly-415, and Asp-495.

The protein belongs to the chaperonin (HSP60) family. As to quaternary structure, forms a cylinder of 14 subunits composed of two heptameric rings stacked back-to-back. Interacts with the co-chaperonin GroES.

The protein resides in the cytoplasm. The enzyme catalyses ATP + H2O + a folded polypeptide = ADP + phosphate + an unfolded polypeptide.. In terms of biological role, together with its co-chaperonin GroES, plays an essential role in assisting protein folding. The GroEL-GroES system forms a nano-cage that allows encapsulation of the non-native substrate proteins and provides a physical environment optimized to promote and accelerate protein folding. This Flavobacterium psychrophilum (strain ATCC 49511 / DSM 21280 / CIP 103535 / JIP02/86) protein is Chaperonin GroEL.